The following is a 133-amino-acid chain: Cytochrome c' (133 aa).

R12, T72, C122, C125, and H126 together coordinate heme c.

In terms of processing, binds 1 heme c group covalently per subunit.

Functionally, cytochrome c' is the most widely occurring bacterial c-type cytochrome. Cytochromes c' are high-spin proteins and the heme has no sixth ligand. Their exact function is not known. The protein is Cytochrome c' of Rhodocyclus tenuis (Rhodospirillum tenue).